Consider the following 432-residue polypeptide: Short/branched chain specific acyl-CoA dehydrogenase, mitochondrial (432 aa).

The N-terminal 33 residues, 1-33, are a transit peptide targeting the mitochondrion; it reads MAVSAFQLWRAGGLLRRNFLTHSSSWKIPPRVL. Lys70 bears the N6-acetyllysine; alternate mark. Position 70 is an N6-succinyllysine; alternate (Lys70). Residues 174–183 and 207–209 each bind FAD; these read FCLSEAGAGS and WIS. Residue Ser183 coordinates substrate. Ser183 is subject to Phosphoserine. Residue Tyr229 participates in substrate binding. Lys278 is modified (N6-succinyllysine). Tyr283 contributes to the substrate binding site. Lys284 carries the post-translational modification N6-acetyllysine; alternate. At Lys284 the chain carries N6-succinyllysine; alternate. Position 291–294 (291–294) interacts with substrate; the sequence is NEGR. Residues Arg319, Gln330, and 387–391 contribute to the FAD site; that span reads EWMGG. The active-site Proton acceptor is Glu414. 416 to 418 provides a ligand contact to FAD; the sequence is TSN. Lys426 carries the N6-acetyllysine modification.

Belongs to the acyl-CoA dehydrogenase family. In terms of assembly, homotetramer. FAD serves as cofactor. In terms of tissue distribution, ubiquitously expressed.

Its subcellular location is the mitochondrion matrix. It catalyses the reaction 2-methylbutanoyl-CoA + oxidized [electron-transfer flavoprotein] + H(+) = (2E)-2-methylbut-2-enoyl-CoA + reduced [electron-transfer flavoprotein]. It carries out the reaction (2S)-2-methylbutanoyl-CoA + oxidized [electron-transfer flavoprotein] + H(+) = (2E)-2-methylbut-2-enoyl-CoA + reduced [electron-transfer flavoprotein]. The enzyme catalyses (2R)-2-methylbutanoyl-CoA + oxidized [electron-transfer flavoprotein] + H(+) = ethylacryloyl-CoA + reduced [electron-transfer flavoprotein]. The catalysed reaction is butanoyl-CoA + oxidized [electron-transfer flavoprotein] + H(+) = (2E)-butenoyl-CoA + reduced [electron-transfer flavoprotein]. It catalyses the reaction 2-methylpropanoyl-CoA + oxidized [electron-transfer flavoprotein] + H(+) = 2-methylpropenoyl-CoA + reduced [electron-transfer flavoprotein]. It carries out the reaction hexanoyl-CoA + oxidized [electron-transfer flavoprotein] + H(+) = (2E)-hexenoyl-CoA + reduced [electron-transfer flavoprotein]. The enzyme catalyses valproyl-CoA + oxidized [electron-transfer flavoprotein] + H(+) = (2E)-2-propylpent-2-enoyl-CoA + reduced [electron-transfer flavoprotein]. Its pathway is lipid metabolism; mitochondrial fatty acid beta-oxidation. The protein operates within amino-acid degradation; L-isoleucine degradation. With respect to regulation, inhibited by N-ethylmaleimide, hydroxymercuribenzoate, methyl mercury iodide and heavy metals such as Hg2+, Cu2+, and Ag2+. Functionally, short and branched chain specific acyl-CoA dehydrogenase that catalyzes the removal of one hydrogen from C-2 and C-3 of the fatty acyl-CoA thioester, resulting in the formation of trans-2-enoyl-CoA. Among the different mitochondrial acyl-CoA dehydrogenases, acts specifically on short and branched chain acyl-CoA derivatives such as (S)-2-methylbutyryl-CoA as well as short straight chain acyl-CoAs such as butyryl-CoA. Plays an important role in the metabolism of L-isoleucine by catalyzing the dehydrogenation of 2-methylbutyryl-CoA, one of the steps of the L-isoleucine catabolic pathway. Can also act on valproyl-CoA, a metabolite of the valproic acid drug. The protein is Short/branched chain specific acyl-CoA dehydrogenase, mitochondrial of Rattus norvegicus (Rat).